The following is a 207-amino-acid chain: Ribosomal RNA small subunit methyltransferase G (207 aa).

S-adenosyl-L-methionine is bound by residues G75, M80, 126 to 127, and R141; that span reads VE.

The protein belongs to the methyltransferase superfamily. RNA methyltransferase RsmG family.

Its subcellular location is the cytoplasm. The catalysed reaction is guanosine(527) in 16S rRNA + S-adenosyl-L-methionine = N(7)-methylguanosine(527) in 16S rRNA + S-adenosyl-L-homocysteine. Specifically methylates the N7 position of guanine in position 527 of 16S rRNA. The chain is Ribosomal RNA small subunit methyltransferase G from Laribacter hongkongensis (strain HLHK9).